We begin with the raw amino-acid sequence, 428 residues long: C4-dicarboxylate transport protein (428 aa).

Helical transmembrane passes span 8-28 (SLYF…HFYP), 44-64 (LIKM…IAGM), 76-96 (VALL…LVIV), 142-162 (IGAF…LFGF), 184-204 (VIFG…FGAM), 222-242 (LIVC…GSIA), 289-309 (VVGL…SIYL), 326-346 (IFHQ…AAGV), and 352-372 (IVLA…LALI).

This sequence belongs to the dicarboxylate/amino acid:cation symporter (DAACS) (TC 2.A.23) family.

The protein resides in the cell inner membrane. Its function is as follows. Responsible for the transport of dicarboxylates such as succinate, fumarate, and malate from the periplasm across the membrane. In Cronobacter sakazakii (strain ATCC BAA-894) (Enterobacter sakazakii), this protein is C4-dicarboxylate transport protein.